A 215-amino-acid chain; its full sequence is Leucyl/phenylalanyl-tRNA--protein transferase (215 aa).

The protein belongs to the L/F-transferase family.

The protein localises to the cytoplasm. It carries out the reaction N-terminal L-lysyl-[protein] + L-leucyl-tRNA(Leu) = N-terminal L-leucyl-L-lysyl-[protein] + tRNA(Leu) + H(+). It catalyses the reaction N-terminal L-arginyl-[protein] + L-leucyl-tRNA(Leu) = N-terminal L-leucyl-L-arginyl-[protein] + tRNA(Leu) + H(+). The catalysed reaction is L-phenylalanyl-tRNA(Phe) + an N-terminal L-alpha-aminoacyl-[protein] = an N-terminal L-phenylalanyl-L-alpha-aminoacyl-[protein] + tRNA(Phe). Functions in the N-end rule pathway of protein degradation where it conjugates Leu, Phe and, less efficiently, Met from aminoacyl-tRNAs to the N-termini of proteins containing an N-terminal arginine or lysine. In Campylobacter jejuni subsp. jejuni serotype O:6 (strain 81116 / NCTC 11828), this protein is Leucyl/phenylalanyl-tRNA--protein transferase.